A 196-amino-acid polypeptide reads, in one-letter code: Molybdenum cofactor guanylyltransferase (196 aa).

GTP is bound by residues 10 to 12 (LAG), lysine 23, asparagine 51, aspartate 69, and aspartate 99. Residue aspartate 99 coordinates Mg(2+).

The protein belongs to the MobA family. Monomer. It depends on Mg(2+) as a cofactor.

It localises to the cytoplasm. The enzyme catalyses Mo-molybdopterin + GTP + H(+) = Mo-molybdopterin guanine dinucleotide + diphosphate. Its function is as follows. Transfers a GMP moiety from GTP to Mo-molybdopterin (Mo-MPT) cofactor (Moco or molybdenum cofactor) to form Mo-molybdopterin guanine dinucleotide (Mo-MGD) cofactor. This Shewanella frigidimarina (strain NCIMB 400) protein is Molybdenum cofactor guanylyltransferase.